The chain runs to 733 residues: DNA-binding protein SATB2 (733 aa).

A disordered region spans residues 1–47 (MERRSESPCLRDSPDRRSGSPDVKGPPPVKVARLEQNGSPMGARGRP). Serine 20 carries the phosphoserine modification. Glycyl lysine isopeptide (Lys-Gly) (interchain with G-Cter in SUMO2) cross-links involve residues lysine 24 and lysine 30. Phosphoserine is present on serine 39. In terms of domain architecture, CMP spans 57 to 158 (GLMIPVFCVV…VVTLKIQLQS (102 aa)). Lysine 161 participates in a covalent cross-link: Glycyl lysine isopeptide (Lys-Gly) (interchain with G-Cter in SUMO2). The 74-residue stretch at 161–234 (KLEDLPAEQW…WYKKYKKIKV (74 aa)) folds into the CUTL domain. Residue lysine 233 forms a Glycyl lysine isopeptide (Lys-Gly) (interchain with G-Cter in SUMO) linkage. Residue lysine 350 forms a Glycyl lysine isopeptide (Lys-Gly) (interchain with G-Cter in SUMO); alternate linkage. Lysine 350 participates in a covalent cross-link: Glycyl lysine isopeptide (Lys-Gly) (interchain with G-Cter in SUMO2); alternate. Residues 350-437 (KPEPTNSSVE…ERDRIYQDER (88 aa)) constitute a DNA-binding region (CUT 1). The interval 435–473 (DERERSMNPNVSMVSSASSSPSSSRTPQAKTSTPTTDLP) is disordered. Low complexity predominate over residues 441 to 458 (MNPNVSMVSSASSSPSSS). Serine 454 carries the post-translational modification Phosphoserine. Polar residues predominate over residues 459-470 (RTPQAKTSTPTT). At threonine 467 the chain carries Phosphothreonine. The CUT 2 DNA-binding region spans 473–560 (PIKVDGANVN…ERDVIYEEES (88 aa)). Lysine 475 participates in a covalent cross-link: Glycyl lysine isopeptide (Lys-Gly) (interchain with G-Cter in SUMO2). 2 disordered regions span residues 580 to 617 (QVLHRQQSQPTKESSPPREEAPPPPPPTEDSCAKKPRS) and 691 to 733 (DEEL…TDQR). A Phosphoserine modification is found at serine 594. Residues 615-674 (PRSRTKISLEALGILQSFIHDVGLYPDQEAIHTLSAQLDLPKHTIIKFFQNQRYHVKHHG) constitute a DNA-binding region (homeobox). Over residues 694 to 708 (LLTESEENDSEEGSE) the composition is skewed to acidic residues. The segment covering 709–733 (EMYKVEAEEENADKSKAAPAETDQR) has biased composition (basic and acidic residues). Lysine 724 is covalently cross-linked (Glycyl lysine isopeptide (Lys-Gly) (interchain with G-Cter in SUMO2)).

It belongs to the CUT homeobox family. In terms of assembly, interacts with PIAS1. Interacts with ATF4 and RUNX2; resulting in enhanced DNA binding and transactivation by these transcription factors. Sumoylated by PIAS1. Sumoylation promotes nuclear localization, but represses transcription factor activity. As to expression, expressed in cortical neurons that extend axons across the corpus callosum. Also expressed in branchial arches and in cells of the osteoblast lineage, but not in chondrocytes and osteoclasts.

Its subcellular location is the nucleus matrix. Its function is as follows. Binds to DNA, at nuclear matrix- or scaffold-associated regions. Thought to recognize the sugar-phosphate structure of double-stranded DNA. Transcription factor controlling nuclear gene expression, by binding to matrix attachment regions (MARs) of DNA and inducing a local chromatin-loop remodeling. Acts as a docking site for several chromatin remodeling enzymes and also by recruiting corepressors (HDACs) or coactivators (HATs) directly to promoters and enhancers. Required for the initiation of the upper-layer neurons (UL1) specific genetic program and for the inactivation of deep-layer neurons (DL) and UL2 specific genes, probably by modulating Bcl11b expression. Repressor of Ctip2 and regulatory determinant of corticocortical connections in the developing cerebral cortex. May play an important role in palate formation. Acts as a molecular node in a transcriptional network regulating skeletal development and osteoblast differentiation. This chain is DNA-binding protein SATB2 (Satb2), found in Mus musculus (Mouse).